The following is a 344-amino-acid chain: tRNA-specific 2-thiouridylase MnmA (344 aa).

Residues 9-16 (AMSGGVDS) and methionine 34 contribute to the ATP site. The active-site Nucleophile is the cysteine 92. A disulfide bridge links cysteine 92 with cysteine 188. Glycine 116 is an ATP binding site. Residues 138–140 (KDQ) are interaction with tRNA. Cysteine 188 serves as the catalytic Cysteine persulfide intermediate.

Belongs to the MnmA/TRMU family.

It is found in the cytoplasm. It carries out the reaction S-sulfanyl-L-cysteinyl-[protein] + uridine(34) in tRNA + AH2 + ATP = 2-thiouridine(34) in tRNA + L-cysteinyl-[protein] + A + AMP + diphosphate + H(+). Functionally, catalyzes the 2-thiolation of uridine at the wobble position (U34) of tRNA, leading to the formation of s(2)U34. This is tRNA-specific 2-thiouridylase MnmA from Desulfotalea psychrophila (strain LSv54 / DSM 12343).